We begin with the raw amino-acid sequence, 845 residues long: Proto-oncogene vav (845 aa).

The Calponin-homology (CH) domain occupies 1-119; it reads MELWRQCTHW…YTLSALSWTP (119 aa). Positions 194–373 constitute a DH domain; sequence KRCCCLREIQ…RDLAQCVNEV (180 aa). The PH domain occupies 402-504; it reads RPKIDGELKI…WMEQFEMAIS (103 aa). A Phorbol-ester/DAG-type zinc finger spans residues 515–564; sequence GHDFQMFSFEETTSCKACQMLLRGTFYQGYRCHRCRASAHKECLGRVPPC. The SH3 1 domain maps to 592–660; sequence LGLPKMEVFQ…PCNRVKPYVH (69 aa). In terms of domain architecture, SH2 spans 671–765; that stretch reads WYAGPMERAG…SLDTTLQFPF (95 aa). Residues 782–842 enclose the SH3 2 domain; that stretch reads KYFGTAKARY…PANYVEEDYS (61 aa). Tyrosine 826 and tyrosine 844 each carry phosphotyrosine.

In terms of assembly, interacts with SHB. Interacts with SH2B2, GRB2, GRB3, DOCK2, SLA, TEC and ZNF655/VIK. Interacts with SIAH2; without leading to its degradation. Associates with BLNK, PLCG1, GRB2 and NCK1 in a B-cell antigen receptor-dependent fashion. Interacts with CBLB; which inhibits tyrosine phosphorylation and down-regulates activity. May interact with CCPG1. Interacts with CLNK. Interacts with THEMIS2. Interacts with NEK3 and this interaction is prolactin-dependent. Interacts with ITK. Interacts with PTK2B/PYK2. Interacts with HCK. Interacts with PTK2B/PYK2. Interacts (via SH2 domain) with SYK. Interacts with ANKRD54. Interacts with CD6. Interacts with isoform 2 of CRACR2A. Interacts with LCP2; this interaction plays a role in TCR-mediated cytokine production. Phosphorylated on tyrosine residues by HCK in response to IFNG and bacterial lipopolysaccharide (LPS). Phosphorylated by FYN. Widely expressed in hematopoietic cells but not in other cell types.

Couples tyrosine kinase signals with the activation of the Rho/Rac GTPases, thus leading to cell differentiation and/or proliferation. The chain is Proto-oncogene vav (VAV1) from Homo sapiens (Human).